A 352-amino-acid polypeptide reads, in one-letter code: Maleylacetate reductase (352 aa).

The protein belongs to the iron-containing alcohol dehydrogenase family.

The catalysed reaction is 3-oxoadipate + NAD(+) = maleylacetate + NADH + H(+). The enzyme catalyses 3-oxoadipate + NADP(+) = maleylacetate + NADPH + H(+). Its pathway is aromatic compound metabolism; 3-chlorocatechol degradation. The polypeptide is Maleylacetate reductase (clcE) (Pseudomonas aeruginosa).